Consider the following 151-residue polypeptide: IFN signaling evasion protein OPG029 (151 aa).

Belongs to the orthopoxvirus OPG029 family. As to quaternary structure, interacts with host TANK, TBKBP1 and AZI2; these interactions prevent interferon production. Interacts with host STAT2.

In terms of biological role, prevents establishment of cellular antiviral state by blocking virus-induced phosphorylation and activation of interferon regulatory factors 3/IRF3 and 7/IRF7, transcription factors critical for the induction of interferons alpha and beta. This blockage is produced through the inhibition of host TBK1, by binding host TBK1 adapter proteins TBKBP1 and AZI2, thereby producing a strong inhibition of the phosphorylation and activation of IRF3 and IRF7. Also acts as an inhibitor of the cellular response to type I IFN by interacting with host STAT2. Mechanistically, exerts its inhibitory effect after host ISGF3 complex (composed of STAT1, STAT2 and IRF9) binding to the interferon stimulated response element (ISRE). This chain is IFN signaling evasion protein OPG029 (OPG029), found in Homo sapiens (Human).